The chain runs to 262 residues: Pyridoxine 5'-phosphate synthase (262 aa).

N6 is a binding site for 3-amino-2-oxopropyl phosphate. 8–9 (DH) serves as a coordination point for 1-deoxy-D-xylulose 5-phosphate. R17 lines the 3-amino-2-oxopropyl phosphate pocket. H43 serves as the catalytic Proton acceptor. Residues R45 and H50 each coordinate 1-deoxy-D-xylulose 5-phosphate. Residue E70 is the Proton acceptor of the active site. T102 is a 1-deoxy-D-xylulose 5-phosphate binding site. The active-site Proton donor is the H215. Residues G216 and 237–238 (GH) contribute to the 3-amino-2-oxopropyl phosphate site.

This sequence belongs to the PNP synthase family. In terms of assembly, homooctamer; tetramer of dimers.

It is found in the cytoplasm. The catalysed reaction is 3-amino-2-oxopropyl phosphate + 1-deoxy-D-xylulose 5-phosphate = pyridoxine 5'-phosphate + phosphate + 2 H2O + H(+). It participates in cofactor biosynthesis; pyridoxine 5'-phosphate biosynthesis; pyridoxine 5'-phosphate from D-erythrose 4-phosphate: step 5/5. In terms of biological role, catalyzes the complicated ring closure reaction between the two acyclic compounds 1-deoxy-D-xylulose-5-phosphate (DXP) and 3-amino-2-oxopropyl phosphate (1-amino-acetone-3-phosphate or AAP) to form pyridoxine 5'-phosphate (PNP) and inorganic phosphate. The sequence is that of Pyridoxine 5'-phosphate synthase from Helicobacter acinonychis (strain Sheeba).